Reading from the N-terminus, the 273-residue chain is L-cysteine S-thiosulfotransferase subunit SoxA (273 aa).

The N-terminal stretch at 1–24 is a signal peptide; the sequence is MKKTVTAVALLCALSSTAIAPTFA. An intrachain disulfide couples cysteine 74 to cysteine 110. The 112-residue stretch at 162-273 folds into the Cytochrome c domain; the sequence is EMYELGKRMF…GVMLTPGIKR (112 aa). Heme-binding residues include cysteine 182 and histidine 186. Arginine 230 serves as a coordination point for substrate. Cysteine 234 contributes to the heme binding site. The active-site Cysteine persulfide intermediate is the cysteine 234.

This sequence belongs to the SoxA family. In terms of assembly, heterodimer of SoxA and SoxX. Requires heme as cofactor. In terms of processing, cysteine persulfide at Cys-234.

Its subcellular location is the periplasm. The catalysed reaction is L-cysteinyl-[SoxY protein] + thiosulfate + 2 Fe(III)-[cytochrome c] = S-sulfosulfanyl-L-cysteinyl-[SoxY protein] + 2 Fe(II)-[cytochrome c] + 2 H(+). It catalyses the reaction S-sulfanyl-L-cysteinyl-[SoxY protein] + thiosulfate + 2 Fe(III)-[cytochrome c] = S-(2-sulfodisulfanyl)-L-cysteinyl-[SoxY protein] + 2 Fe(II)-[cytochrome c] + 2 H(+). Functionally, C-type monoheme cytochrome, which is part of the SoxAX cytochrome complex involved in sulfur oxidation. The SoxAX complex catalyzes the formation of a heterodisulfide bond between the conserved cysteine residue on a sulfur carrier SoxYZ complex subunit SoxY and thiosulfate or other inorganic sulfur substrates. This leads to the liberation of two electrons, which may be transferred from the SoxAX complex to another cytochrome c that then channels them into the respiratory electron transport chain. Some electrons may be used for reductive CO(2) fixation. This is L-cysteine S-thiosulfotransferase subunit SoxA from Hydrogenophilus thermoluteolus (Pseudomonas hydrogenothermophila).